Consider the following 280-residue polypeptide: Large ribosomal subunit protein uL2 (280 aa).

Disordered stretches follow at residues 32–54 and 221–280; these read SLLVPNKSTGGRNNNGRVTSRHM and RGMA…DSKK. The span at 37 to 49 shows a compositional bias: polar residues; that stretch reads NKSTGGRNNNGRV. Residues 232–242 are compositionally biased toward gly residues; the sequence is MGGGEGKSKSG. Residues 257–280 are compositionally biased toward basic residues; that stretch reads KGLKTRKRKKASSKLIVRRRDSKK.

Belongs to the universal ribosomal protein uL2 family. Part of the 50S ribosomal subunit. Forms a bridge to the 30S subunit in the 70S ribosome.

In terms of biological role, one of the primary rRNA binding proteins. Required for association of the 30S and 50S subunits to form the 70S ribosome, for tRNA binding and peptide bond formation. It has been suggested to have peptidyltransferase activity; this is somewhat controversial. Makes several contacts with the 16S rRNA in the 70S ribosome. The chain is Large ribosomal subunit protein uL2 from Chloroherpeton thalassium (strain ATCC 35110 / GB-78).